Consider the following 230-residue polypeptide: Large ribosomal subunit protein uL1 (230 aa).

It belongs to the universal ribosomal protein uL1 family. As to quaternary structure, part of the 50S ribosomal subunit.

Its function is as follows. Binds directly to 23S rRNA. The L1 stalk is quite mobile in the ribosome, and is involved in E site tRNA release. In terms of biological role, protein L1 is also a translational repressor protein, it controls the translation of the L11 operon by binding to its mRNA. The sequence is that of Large ribosomal subunit protein uL1 from Caldicellulosiruptor bescii (strain ATCC BAA-1888 / DSM 6725 / KCTC 15123 / Z-1320) (Anaerocellum thermophilum).